Reading from the N-terminus, the 882-residue chain is Valine--tRNA ligase (882 aa).

Residues 45–55 (PNVTGKLHLGH) carry the 'HIGH' region motif. A 'KMSKS' region motif is present at residues 519–523 (KMSKS). Residue K522 participates in ATP binding. Residues 808-882 (LADLLNVEEE…RIAEMQKLVK (75 aa)) adopt a coiled-coil conformation.

Belongs to the class-I aminoacyl-tRNA synthetase family. ValS type 1 subfamily. In terms of assembly, monomer.

It is found in the cytoplasm. The enzyme catalyses tRNA(Val) + L-valine + ATP = L-valyl-tRNA(Val) + AMP + diphosphate. In terms of biological role, catalyzes the attachment of valine to tRNA(Val). As ValRS can inadvertently accommodate and process structurally similar amino acids such as threonine, to avoid such errors, it has a 'posttransfer' editing activity that hydrolyzes mischarged Thr-tRNA(Val) in a tRNA-dependent manner. This Streptococcus pyogenes serotype M3 (strain ATCC BAA-595 / MGAS315) protein is Valine--tRNA ligase.